Consider the following 298-residue polypeptide: MTQLIITHQSDSKLEESEVFLSELNRIKKEEDKFGKFSSLSDLRAIVKKGEFRIVSIYLSSGSILGEIFTFEFLKEFYGVLDFGSVLKVNILALDSIDKVKAFERNLLFSGFIKVKKLKGDGLNSSDSDFEIVIKAEKPSWKPEEGKVLVDDIDLEGSVPDIKNYVPLGQGKESCKSKERACNNCNCGRADLEKEIGVEAARKVYQEKVETGTARSSCGNCYLGDAFRCSGCPYKGMPAFKPGEKVSLANAEGDANDHTVDMNLIHEEKVDLITTTFDDDGSGVNNVQSKGGVLKLNI.

The N-terminal SAM-like domain stretch occupies residues 1–143; that stretch reads MTQLIITHQS…IKAEKPSWKP (143 aa). Residues 143-162 are linker; the sequence is PEEGKVLVDDIDLEGSVPDI. 4 residues coordinate [2Fe-2S] cluster: Cys175, Cys182, Cys185, and Cys187. A fe-S binding site A region spans residues 175–187; sequence CKSKERACNNCNC. Cys218, Cys221, Cys229, and Cys232 together coordinate [4Fe-4S] cluster. 2 consecutive short sequence motifs (cx2C motif) follow at residues 218 to 221 and 229 to 232; these read CGNC and CSGC. A fe-S binding site B region spans residues 218-232; that stretch reads CGNCYLGDAFRCSGC.

This sequence belongs to the anamorsin family. In terms of assembly, monomer. [2Fe-2S] cluster is required as a cofactor. The cofactor is [4Fe-4S] cluster.

It is found in the cytoplasm. The protein localises to the mitochondrion intermembrane space. Its function is as follows. Component of the cytosolic iron-sulfur (Fe-S) protein assembly (CIA) machinery. Required for the maturation of extramitochondrial Fe-S proteins. Part of an electron transfer chain functioning in an early step of cytosolic Fe-S biogenesis, facilitating the de novo assembly of a [4Fe-4S] cluster on the cytosolic Fe-S scaffold complex. Electrons are transferred from NADPH via a FAD- and FMN-containing diflavin oxidoreductase. Together with the diflavin oxidoreductase, also required for the assembly of the diferric tyrosyl radical cofactor of ribonucleotide reductase (RNR), probably by providing electrons for reduction during radical cofactor maturation in the catalytic small subunit. The protein is Anamorsin homolog of Cryptosporidium parvum (strain Iowa II).